Reading from the N-terminus, the 509-residue chain is ATP synthase subunit alpha (509 aa).

169–176 (GDRQTGKT) contributes to the ATP binding site.

It belongs to the ATPase alpha/beta chains family. In terms of assembly, F-type ATPases have 2 components, CF(1) - the catalytic core - and CF(0) - the membrane proton channel. CF(1) has five subunits: alpha(3), beta(3), gamma(1), delta(1), epsilon(1). CF(0) has three main subunits: a(1), b(2) and c(9-12). The alpha and beta chains form an alternating ring which encloses part of the gamma chain. CF(1) is attached to CF(0) by a central stalk formed by the gamma and epsilon chains, while a peripheral stalk is formed by the delta and b chains.

The protein resides in the cell inner membrane. The catalysed reaction is ATP + H2O + 4 H(+)(in) = ADP + phosphate + 5 H(+)(out). Functionally, produces ATP from ADP in the presence of a proton gradient across the membrane. The alpha chain is a regulatory subunit. This is ATP synthase subunit alpha from Methylorubrum extorquens (strain CM4 / NCIMB 13688) (Methylobacterium extorquens).